The primary structure comprises 308 residues: MFMQKIIVLIGPTGIGKTELALKLAPKINAEIISGDSMQIYQEVSIGTAKPTAEELRQVKHYLVNQRSIFDEYSVKDFVAEGKKAVNQIAAKGSIPLVVGGTGFYINALVNKLQLGEPGDYQTSVDSKWEKYLKDNGAEKLWQLLDEKDPVAAKKIAPQNSRRTLRALTVISRTGKLFSQQQAQISPRYDALIIGLNSNREEVYQRINKRVDKMMNAGLLKEAKFVYDNRAREHQAIQAIGYKEFFPYFSGEKTLDECVNKLKQASRKYAKRQLTYFKHQLSVVWLDPLQDKEVSERALNEIKSFLNK.

An ATP-binding site is contributed by 11 to 18; that stretch reads GPTGIGKT. 13–18 contacts substrate; it reads TGIGKT. The tract at residues 36 to 39 is interaction with substrate tRNA; sequence DSMQ.

The protein belongs to the IPP transferase family. As to quaternary structure, monomer. The cofactor is Mg(2+).

It catalyses the reaction adenosine(37) in tRNA + dimethylallyl diphosphate = N(6)-dimethylallyladenosine(37) in tRNA + diphosphate. Catalyzes the transfer of a dimethylallyl group onto the adenine at position 37 in tRNAs that read codons beginning with uridine, leading to the formation of N6-(dimethylallyl)adenosine (i(6)A). This Lactobacillus gasseri (strain ATCC 33323 / DSM 20243 / BCRC 14619 / CIP 102991 / JCM 1131 / KCTC 3163 / NCIMB 11718 / NCTC 13722 / AM63) protein is tRNA dimethylallyltransferase.